The primary structure comprises 61 residues: Large ribosomal subunit protein bL32 (61 aa).

Residues 1–16 are compositionally biased toward basic residues; that stretch reads MAVPKRKTSPSKRGMR. Residues 1–61 are disordered; the sequence is MAVPKRKTSP…RQVLTPKESA (61 aa). Residues 28–44 show a composition bias toward basic and acidic residues; it reads VEDKNSGELRRPHHIDL.

Belongs to the bacterial ribosomal protein bL32 family.

This Rhizobium etli (strain CIAT 652) protein is Large ribosomal subunit protein bL32.